The following is a 674-amino-acid chain: Sodium/myo-inositol cotransporter 2 (674 aa).

The Extracellular portion of the chain corresponds to 1-25; sequence MESSASSPPLTQSDPLEAFPRRTLE. Residues 26 to 46 form a helical membrane-spanning segment; that stretch reads AGDIAVLVLYFLFVLAVGLWS. Residues 47–56 lie on the Cytoplasmic side of the membrane; it reads TVKTKRDTVK. A helical transmembrane segment spans residues 57 to 77; the sequence is GYFLAGGNMLWWPVGASLFAS. The Extracellular segment spans residues 78–102; sequence NVGSGHFVGLAGSGAAAGLSVTAYE. A helical transmembrane segment spans residues 103 to 123; sequence LNGLFFVLMLSWIFLPIYITG. Residues 124-140 lie on the Cytoplasmic side of the membrane; it reads QVTTMPEYLRKRFGGNR. Residues 141–161 form a helical membrane-spanning segment; sequence IPIILAVLYLFIYIFTKISVD. Residues 162 to 180 lie on the Extracellular side of the membrane; sequence MYAGAIFIQQSLHVNLYLA. Residues 181-201 traverse the membrane as a helical segment; sequence IVGLLAVTALYTIAGGLAAVI. The Cytoplasmic portion of the chain corresponds to 202-208; the sequence is YTDALQT. The chain crosses the membrane as a helical span at residues 209–229; that stretch reads LIMLIGALILMGYSFAAVGGL. Over 230–272 the chain is Extracellular; that stretch reads EGLEEKYFLAMASNRSGNSSCGLPREDAFHIFRDPVTSDLPWP. Residues 273–293 traverse the membrane as a helical segment; sequence GILFGMSIPSLWYWCTDQVIV. Residues 294 to 308 lie on the Cytoplasmic side of the membrane; that stretch reads QRTLAAKNLSHAKGG. The helical transmembrane segment at 309-329 threads the bilayer; the sequence is SLMAAYLKVLPLFIMVFPGMV. Over 330 to 374 the chain is Extracellular; sequence SRVLFPDEVACADPEICRKVCSNPAGCSDIAYPKLVLELLPTGLR. A helical membrane pass occupies residues 375–397; that stretch reads GLMMAVMVAALTSSLTSIFNSAS. Topologically, residues 398-418 are cytoplasmic; sequence TIFTMDLWNHLRPRASEKELM. A helical transmembrane segment spans residues 419–439; sequence IVGRVFVLLLVLVSILWIPVV. Residues 440-446 lie on the Extracellular side of the membrane; it reads QASQGGQ. A helical membrane pass occupies residues 447-467; that stretch reads LFIYIQSISSYLQPPVAVVFI. At 468 to 479 the chain is on the cytoplasmic side; sequence MGCFWKRANEKG. The chain crosses the membrane as a helical span at residues 480 to 500; sequence AFFGLVLGLLLGLVRLILDFI. The Extracellular portion of the chain corresponds to 501 to 521; that stretch reads YVQPRCDQLDERPAVVKDVHY. A helical transmembrane segment spans residues 522–542; it reads LYFSMILSSVTLITVCAVSWF. The Cytoplasmic segment spans residues 543-653; the sequence is TEPPSKEMVS…SLEENPLVKT (111 aa). A disordered region spans residues 567 to 589; sequence EQVPSATPPPLTLSQNGTPEASG. Over residues 578–589 the composition is skewed to polar residues; sequence TLSQNGTPEASG. A helical transmembrane segment spans residues 654-674; that stretch reads LLDLNLIICISCAIFLWGYFA.

The protein belongs to the sodium:solute symporter (SSF) (TC 2.A.21) family.

It localises to the membrane. The protein resides in the apical cell membrane. It catalyses the reaction myo-inositol(out) + 2 Na(+)(out) = myo-inositol(in) + 2 Na(+)(in). The enzyme catalyses 1D-chiro-inositol(out) + 2 Na(+)(out) = 1D-chiro-inositol(in) + 2 Na(+)(in). It carries out the reaction D-glucose(out) + 2 Na(+)(out) = D-glucose(in) + 2 Na(+)(in). The catalysed reaction is D-xylose(out) + 2 Na(+)(out) = D-xylose(in) + 2 Na(+)(in). MI transport activity inhibited by D-chiro-inositol (DCI), phlorizin (Pz) and sodium (Na(+)). Insulin increases D-chiro-inositol uptake. Involved in the sodium-dependent cotransport of myo-inositol (MI) with a Na(+):MI stoichiometry of 2:1. Exclusively responsible for apical MI transport and absorption in intestine. Can also transport D-chiro-inositol (DCI) but not L-fucose. Exhibits stereospecific cotransport of both D-glucose and D-xylose. May induce apoptosis through the TNF-alpha, PDCD1 pathway. May play a role in the regulation of MI concentration in serum, involving reabsorption in at least the proximal tubule of the kidney. This is Sodium/myo-inositol cotransporter 2 from Bos taurus (Bovine).